The following is a 1334-amino-acid chain: Aldehyde oxidase 1 (1334 aa).

The 88-residue stretch at 5–92 (PELLFYVNGR…GAAVTTVEGI (88 aa)) folds into the 2Fe-2S ferredoxin-type domain. Positions 44, 49, 52, and 74 each coordinate [2Fe-2S] cluster. Position 113 (Gln113) interacts with Mo-molybdopterin. [2Fe-2S] cluster-binding residues include Cys114, Cys117, Cys149, and Cys151. Cys151 serves as a coordination point for Mo-molybdopterin. The region spanning 236 to 421 (FSGERMMWIS…ASVHIPYSRK (186 aa)) is the FAD-binding PCMH-type domain. Residues 264–271 (VVMGNTSV), Ala345, Ser354, His358, Asp367, and Leu411 each bind FAD. Mo-molybdopterin is bound by residues 802–803 (AF) and Met1043. Ser1064 bears the Phosphoserine mark. Mo-molybdopterin contacts are provided by residues 1084–1087 (GSVV), Gln1199, and Leu1264. The Proton acceptor; for azaheterocycle hydroxylase activity role is filled by Glu1266.

It belongs to the xanthine dehydrogenase family. Homodimer. [2Fe-2S] cluster is required as a cofactor. The cofactor is FAD. Mo-molybdopterin serves as cofactor. The N-terminus is blocked. In terms of tissue distribution, very high expression in liver and lung. High expression in kidney, pancreas, brain stem and spinal cord. Moderate expression in heart, testis, eye, cerebral cortex and cerebellum. Low expression in stomach and muscle.

The protein localises to the cytoplasm. It catalyses the reaction an aldehyde + O2 + H2O = a carboxylate + H2O2 + H(+). It carries out the reaction retinal + O2 + H2O = retinoate + H2O2 + H(+). The catalysed reaction is all-trans-retinal + O2 + H2O = all-trans-retinoate + H2O2 + H(+). Its activity is regulated as follows. Inhibited by hydralazine and menadione. Not inhibited by BOF-4272 or allopurinol, xanthine dehydrogenase potent inhibitors. In contrast to guinea pig, human and rat, isovanillin is not an inhibitor but a substrate for AOX1 in rabbit. In terms of biological role, oxidase with broad substrate specificity, oxidizing aromatic azaheterocycles, such as N1-methylnicotinamide, N-methylphthalazinium and phthalazine, as well as aldehydes, such as benzaldehyde, retinal, pyridoxal, and vanillin. Plays a key role in the metabolism of xenobiotics and drugs containing aromatic azaheterocyclic substituents. Participates in the bioactivation of prodrugs such as famciclovir, catalyzing the oxidation step from 6-deoxypenciclovir to penciclovir, which is a potent antiviral agent. Is probably involved in the regulation of reactive oxygen species homeostasis. May be a prominent source of superoxide generation via the one-electron reduction of molecular oxygen. May also catalyze nitric oxide (NO) production via the reduction of nitrite to NO with NADH or aldehyde as electron donor. May play a role in adipogenesis. Cannot use hypoxanthine and all-trans-retinol as substrate. This Oryctolagus cuniculus (Rabbit) protein is Aldehyde oxidase 1.